We begin with the raw amino-acid sequence, 98 residues long: NADH-ubiquinone oxidoreductase chain 4L (98 aa).

Helical transmembrane passes span 1 to 21 (MSSY…GILL), 24 to 44 (LHLL…FIWI), and 61 to 81 (LILL…MVAL).

Belongs to the complex I subunit 4L family.

Its subcellular location is the mitochondrion membrane. The catalysed reaction is a ubiquinone + NADH + 5 H(+)(in) = a ubiquinol + NAD(+) + 4 H(+)(out). In terms of biological role, core subunit of the mitochondrial membrane respiratory chain NADH dehydrogenase (Complex I) that is believed to belong to the minimal assembly required for catalysis. Complex I functions in the transfer of electrons from NADH to the respiratory chain. The immediate electron acceptor for the enzyme is believed to be ubiquinone. The polypeptide is NADH-ubiquinone oxidoreductase chain 4L (ND4L) (Pisaster ochraceus (Ochre sea star)).